A 1368-amino-acid polypeptide reads, in one-letter code: DNA-directed RNA polymerase subunit beta (1368 aa).

Belongs to the RNA polymerase beta chain family. In terms of assembly, the RNAP catalytic core consists of 2 alpha, 1 beta, 1 beta' and 1 omega subunit. When a sigma factor is associated with the core the holoenzyme is formed, which can initiate transcription.

It catalyses the reaction RNA(n) + a ribonucleoside 5'-triphosphate = RNA(n+1) + diphosphate. In terms of biological role, DNA-dependent RNA polymerase catalyzes the transcription of DNA into RNA using the four ribonucleoside triphosphates as substrates. This Burkholderia thailandensis (strain ATCC 700388 / DSM 13276 / CCUG 48851 / CIP 106301 / E264) protein is DNA-directed RNA polymerase subunit beta.